The primary structure comprises 310 residues: tRNA dimethylallyltransferase (310 aa).

13–20 is a binding site for ATP; that stretch reads GPTASGKT. 15 to 20 contacts substrate; sequence TASGKT. Interaction with substrate tRNA stretches follow at residues 38–41, 162–166, 243–248, and 276–283; these read DSAL, QRLSR, RCVGYR, and KRQITWLR.

Belongs to the IPP transferase family. As to quaternary structure, monomer. It depends on Mg(2+) as a cofactor.

The catalysed reaction is adenosine(37) in tRNA + dimethylallyl diphosphate = N(6)-dimethylallyladenosine(37) in tRNA + diphosphate. Its function is as follows. Catalyzes the transfer of a dimethylallyl group onto the adenine at position 37 in tRNAs that read codons beginning with uridine, leading to the formation of N6-(dimethylallyl)adenosine (i(6)A). This chain is tRNA dimethylallyltransferase, found in Vibrio atlanticus (strain LGP32) (Vibrio splendidus (strain Mel32)).